Here is a 206-residue protein sequence, read N- to C-terminus: Peptidyl-tRNA hydrolase (206 aa).

A tRNA-binding site is contributed by Y14. H19 (proton acceptor) is an active-site residue. TRNA-binding residues include Y64 and N66. Residues 182–206 (FNQKNKKKKEKEQPEAATDQLLENK) form a disordered region.

This sequence belongs to the PTH family. Monomer.

The protein localises to the cytoplasm. It carries out the reaction an N-acyl-L-alpha-aminoacyl-tRNA + H2O = an N-acyl-L-amino acid + a tRNA + H(+). Hydrolyzes ribosome-free peptidyl-tRNAs (with 1 or more amino acids incorporated), which drop off the ribosome during protein synthesis, or as a result of ribosome stalling. In terms of biological role, catalyzes the release of premature peptidyl moieties from peptidyl-tRNA molecules trapped in stalled 50S ribosomal subunits, and thus maintains levels of free tRNAs and 50S ribosomes. The protein is Peptidyl-tRNA hydrolase of Desulforamulus reducens (strain ATCC BAA-1160 / DSM 100696 / MI-1) (Desulfotomaculum reducens).